Consider the following 344-residue polypeptide: RNA-binding protein squid (344 aa).

The interval 1-55 (MAENKQVDTEINGEDFTKDVTADGPGSENGDAGAAGSTNGSSDNQSAASGQRDDD) is disordered. The span at 36-49 (GSTNGSSDNQSAAS) shows a compositional bias: polar residues. RRM domains are found at residues 56–138 (RKLF…HGKI) and 136–213 (GKIF…RATP). S148 carries the phosphoserine modification. 2 disordered regions span residues 214 to 238 (KPEN…RGGY) and 301 to 344 (GGGG…HQPY). The interval 215-254 (PENQMMGGMRGGPRGGMRGGRGGYGGRGGYNNQWDGQGSY) is M9-like motif. Composition is skewed to gly residues over residues 222-238 (GMRG…RGGY) and 301-337 (GGGG…GGGR). The tract at residues 300 to 338 (GGGGGGNMGGGRGGPRGGGGPKGGGGFNGGKQRGGGGRQ) is M9 motif.

As to quaternary structure, interacts with bru1/Bruno; the interaction is direct but weak, and may play a role in regulation of grk mRNA localization and translation. In terms of assembly, interacts (probably via M9 and M9-like motifs) with Tnpo/Transportin; the interaction is direct and is involved in nuclear localization. Interacts with fs(1)K10 (via N-terminus); may be involved in localization of sqd in the oocyte during oogenesis. Interacts (via C-terminus) with Hrb27C; the interaction is RNA dependent. Does not interact with Tnpo/Transportin. Interacts with fs(1)K10 (via N-terminus); may be involved in localization of sqd in the oocyte during oogenesis. As to quaternary structure, interacts (probably via M9-like motif) with Tnpo/Transportin; the interaction is direct and is involved in nuclear localization. Interacts with fs(1)K10 (via N-terminus); may be involved in localization of sqd in the oocyte during oogenesis.

It localises to the nucleus. It is found in the cytoplasm. In terms of biological role, component of ribonucleosomes. Could be needed to organize a concentration gradient of a dorsalizing morphogen (Dm) originating in the germinal vesicle. At least one of the isoforms is essential in somatic tissues. Interacts with grk mRNA (via 3' UTR) and involved in its localization to the dorsal anterior region of the oocyte during dorsal-ventral axis determination; may function as a ribonuclear protein complex together with otu and Hrb27C. Required for polytene chromosome dispersal in nurse cells during oogenesis; nuclear isoforms play a greater role in this than cytoplasmic isoforms. Its function is as follows. Required nonredundantly with isoform A/sqdA for dorsoventral pattern determination during oogenesis. May be important in somatic tissues. Functionally, required nonredundantly with isoform B/SqdS for dorsoventral pattern determination during oogenesis. May lack a role in dorsoventral pattern determination during oogenesis. May be important in somatic tissues. This chain is RNA-binding protein squid, found in Drosophila melanogaster (Fruit fly).